The chain runs to 289 residues: Phosphatidylserine decarboxylase proenzyme (289 aa).

Catalysis depends on charge relay system; for autoendoproteolytic cleavage activity residues Asp92, His149, and Ser254. The active-site Schiff-base intermediate with substrate; via pyruvic acid; for decarboxylase activity is the Ser254. Position 254 is a pyruvic acid (Ser); by autocatalysis (Ser254).

This sequence belongs to the phosphatidylserine decarboxylase family. PSD-B subfamily. Prokaryotic type I sub-subfamily. Heterodimer of a large membrane-associated beta subunit and a small pyruvoyl-containing alpha subunit. It depends on pyruvate as a cofactor. Is synthesized initially as an inactive proenzyme. Formation of the active enzyme involves a self-maturation process in which the active site pyruvoyl group is generated from an internal serine residue via an autocatalytic post-translational modification. Two non-identical subunits are generated from the proenzyme in this reaction, and the pyruvate is formed at the N-terminus of the alpha chain, which is derived from the carboxyl end of the proenzyme. The autoendoproteolytic cleavage occurs by a canonical serine protease mechanism, in which the side chain hydroxyl group of the serine supplies its oxygen atom to form the C-terminus of the beta chain, while the remainder of the serine residue undergoes an oxidative deamination to produce ammonia and the pyruvoyl prosthetic group on the alpha chain. During this reaction, the Ser that is part of the protease active site of the proenzyme becomes the pyruvoyl prosthetic group, which constitutes an essential element of the active site of the mature decarboxylase.

It is found in the cell membrane. The enzyme catalyses a 1,2-diacyl-sn-glycero-3-phospho-L-serine + H(+) = a 1,2-diacyl-sn-glycero-3-phosphoethanolamine + CO2. It participates in phospholipid metabolism; phosphatidylethanolamine biosynthesis; phosphatidylethanolamine from CDP-diacylglycerol: step 2/2. Functionally, catalyzes the formation of phosphatidylethanolamine (PtdEtn) from phosphatidylserine (PtdSer). The polypeptide is Phosphatidylserine decarboxylase proenzyme (Pseudomonas aeruginosa (strain ATCC 15692 / DSM 22644 / CIP 104116 / JCM 14847 / LMG 12228 / 1C / PRS 101 / PAO1)).